The primary structure comprises 512 residues: Envelope glycoprotein (512 aa).

The N-terminal stretch at 1 to 15 is a signal peptide; that stretch reads MFLQTALLLLSLGVA. Asn185, Asn263, Asn289, Asn378, and Asn416 each carry an N-linked (GlcNAc...) asparagine; by host glycan. The chain crosses the membrane as a helical span at residues 479-502; that stretch reads GQLGGLLYGNIGVYLLIAFAFVLL.

The protein localises to the virion membrane. Attaches the virus to host cellular receptor and later induces fusion of virion with host membrane. This is Envelope glycoprotein from Thogoto virus (isolate SiAr 126) (Tho).